A 554-amino-acid chain; its full sequence is Afadin- and alpha-actinin-binding protein A (554 aa).

Coiled coils occupy residues 122–287 (LEYL…SQRK) and 359–449 (ENGL…AIRL). The interval 508–528 (LASSGDYSRRPSKALPITSSS) is disordered.

The protein belongs to the ADIP family. Interacts with WRAP73.

The protein localises to the cell junction. It is found in the adherens junction. Its subcellular location is the cytoplasm. The protein resides in the cytoskeleton. It localises to the microtubule organizing center. The protein localises to the centrosome. It is found in the centriolar satellite. Its function is as follows. Belongs to an adhesion system, which plays a role in the organization of homotypic, interneuronal and heterotypic cell-cell adherens junctions (AJs). Involved in cell movement. Acts as a centrosome maturation factor, probably by maintaining the integrity of the pericentriolar material and proper microtubule nucleation at mitotic spindle poles. The function seems to implicate at least in part WRAP73; the SSX2IP:WRAP73 complex is proposed to act as regulator of spindle anchoring at the mitotic centrosome. This is Afadin- and alpha-actinin-binding protein A (ssx2ip-a) from Xenopus laevis (African clawed frog).